We begin with the raw amino-acid sequence, 307 residues long: Protoheme IX farnesyltransferase (307 aa).

8 consecutive transmembrane segments (helical) span residues 32-52 (MGIV…ALHF), 65-85 (FFTI…NNYI), 108-128 (PGFA…FLLL), 131-151 (PMAV…YTLW), 158-178 (LNTV…WAAI), 186-206 (IAWM…LALA), 251-271 (LGIT…ALGL), and 287-307 (FVYS…VTFF).

This sequence belongs to the UbiA prenyltransferase family. Protoheme IX farnesyltransferase subfamily. In terms of assembly, interacts with CtaA.

The protein localises to the cell membrane. The catalysed reaction is heme b + (2E,6E)-farnesyl diphosphate + H2O = Fe(II)-heme o + diphosphate. It participates in porphyrin-containing compound metabolism; heme O biosynthesis; heme O from protoheme: step 1/1. Its function is as follows. Converts heme B (protoheme IX) to heme O by substitution of the vinyl group on carbon 2 of heme B porphyrin ring with a hydroxyethyl farnesyl side group. The polypeptide is Protoheme IX farnesyltransferase (Bacillus mycoides (strain KBAB4) (Bacillus weihenstephanensis)).